The sequence spans 328 residues: DNA-directed RNA polymerase subunit alpha (328 aa).

Positions 1-231 (MIYQMQMPTK…DHITFFANFS (231 aa)) are alpha N-terminal domain (alpha-NTD). Residues 247–328 (DEFESMRKLL…MDITRYQLKG (82 aa)) are alpha C-terminal domain (alpha-CTD).

Belongs to the RNA polymerase alpha chain family. As to quaternary structure, homodimer. The RNAP catalytic core consists of 2 alpha, 1 beta, 1 beta' and 1 omega subunit. When a sigma factor is associated with the core the holoenzyme is formed, which can initiate transcription.

The enzyme catalyses RNA(n) + a ribonucleoside 5'-triphosphate = RNA(n+1) + diphosphate. Its function is as follows. DNA-dependent RNA polymerase catalyzes the transcription of DNA into RNA using the four ribonucleoside triphosphates as substrates. In Chlorobaculum tepidum (strain ATCC 49652 / DSM 12025 / NBRC 103806 / TLS) (Chlorobium tepidum), this protein is DNA-directed RNA polymerase subunit alpha.